The primary structure comprises 424 residues: Serine hydroxymethyltransferase 2 (424 aa).

(6S)-5,6,7,8-tetrahydrofolate is bound by residues L125 and 129–131 (GHL). Residue K234 is modified to N6-(pyridoxal phosphate)lysine. A (6S)-5,6,7,8-tetrahydrofolate-binding site is contributed by E250.

This sequence belongs to the SHMT family. As to quaternary structure, homodimer. It depends on pyridoxal 5'-phosphate as a cofactor.

It is found in the cytoplasm. The enzyme catalyses (6R)-5,10-methylene-5,6,7,8-tetrahydrofolate + glycine + H2O = (6S)-5,6,7,8-tetrahydrofolate + L-serine. The protein operates within one-carbon metabolism; tetrahydrofolate interconversion. It participates in amino-acid biosynthesis; glycine biosynthesis; glycine from L-serine: step 1/1. Catalyzes the reversible interconversion of serine and glycine with tetrahydrofolate (THF) serving as the one-carbon carrier. This reaction serves as the major source of one-carbon groups required for the biosynthesis of purines, thymidylate, methionine, and other important biomolecules. Also exhibits THF-independent aldolase activity toward beta-hydroxyamino acids, producing glycine and aldehydes, via a retro-aldol mechanism. The sequence is that of Serine hydroxymethyltransferase 2 from Ralstonia nicotianae (strain ATCC BAA-1114 / GMI1000) (Ralstonia solanacearum).